The following is a 438-amino-acid chain: Transposon Ty2-F Gag polyprotein (438 aa).

Polar residues-rich tracts occupy residues 1–11, 19–39, and 49–60; these read MESQQLHQNPH, ASVT…SASN, and KVNSQQETTPGT. Disordered stretches follow at residues 1–86, 366–397, and 419–438; these read MESQ…GQYQ, VSRT…AKAH, and SSQY…TERI. The tract at residues 295 to 397 is RNA-binding; that stretch reads ENNINVSDRL…SSKPRAAKAH (103 aa). Positions 369–381 are enriched in low complexity; it reads TSPNTTNTKVTTR.

As to quaternary structure, homotrimer.

It is found in the cytoplasm. Its function is as follows. Capsid protein (CA) is the structural component of the virus-like particle (VLP), forming the shell that encapsulates the retrotransposons dimeric RNA genome. The particles are assembled from trimer-clustered units and there are holes in the capsid shells that allow for the diffusion of macromolecules. CA also has nucleocapsid-like chaperone activity, promoting primer tRNA(i)-Met annealing to the multipartite primer-binding site (PBS), dimerization of Ty2 RNA and initiation of reverse transcription. In Saccharomyces cerevisiae (strain ATCC 204508 / S288c) (Baker's yeast), this protein is Transposon Ty2-F Gag polyprotein (TY2A-F).